Here is a 349-residue protein sequence, read N- to C-terminus: Cytoplasmic tRNA 2-thiolation protein 2 (349 aa).

Belongs to the CTU2/NCS2 family.

The protein localises to the cytoplasm. Its pathway is tRNA modification; 5-methoxycarbonylmethyl-2-thiouridine-tRNA biosynthesis. In terms of biological role, plays a central role in 2-thiolation of mcm(5)S(2)U at tRNA wobble positions of tRNA(Lys), tRNA(Glu) and tRNA(Gln). May act by forming a heterodimer with tut-1/ctu-1 that ligates sulfur from thiocarboxylated urm-1 onto the uridine of tRNAs at wobble position. In Caenorhabditis elegans, this protein is Cytoplasmic tRNA 2-thiolation protein 2.